A 138-amino-acid chain; its full sequence is Acidic phospholipase A2 BthA-1 (138 aa).

The N-terminal stretch at 1–16 is a signal peptide; sequence MRTLWIMAVLLVGVEG. Cystine bridges form between cysteine 42-cysteine 131, cysteine 44-cysteine 60, cysteine 59-cysteine 111, cysteine 65-cysteine 138, cysteine 66-cysteine 104, cysteine 73-cysteine 97, and cysteine 91-cysteine 102. Ca(2+)-binding residues include tyrosine 43, glycine 47, and glycine 48. Histidine 63 is a catalytic residue. Aspartate 64 provides a ligand contact to Ca(2+). Aspartate 105 is an active-site residue.

The protein belongs to the phospholipase A2 family. Group II subfamily. D49 sub-subfamily. As to quaternary structure, homodimer; non-covalently linked. The cofactor is Ca(2+). Expressed by the venom gland.

Its subcellular location is the secreted. The catalysed reaction is a 1,2-diacyl-sn-glycero-3-phosphocholine + H2O = a 1-acyl-sn-glycero-3-phosphocholine + a fatty acid + H(+). Its activity is regulated as follows. Inhibited by EDTA and bromophenacyl bromide (BPB). In terms of biological role, snake venom phospholipase A2 (PLA2) that displays edema-inducing activities (activity that is inhibited by EDTA and dexamethasone), inhibits phospholipid-dependent collagen/ADP-induced platelet aggregation, possess hypotensive as well as anticoagulant activities. In addition, this enzyme shows bactericidal activity against E.coli and S.aureus. PLA2 catalyzes the calcium-dependent hydrolysis of the 2-acyl groups in 3-sn-phosphoglycerides. The polypeptide is Acidic phospholipase A2 BthA-1 (Bothrops jararacussu (Jararacussu)).